Reading from the N-terminus, the 263-residue chain is Oxidoreductase UcpA (263 aa).

10-32 (LITGALQGIGEGIARTFARHGAN) contacts NAD(+). Ser141 contributes to the substrate binding site. Tyr155 acts as the Proton acceptor in catalysis.

Belongs to the short-chain dehydrogenases/reductases (SDR) family.

The sequence is that of Oxidoreductase UcpA (ucpA) from Escherichia coli O157:H7.